A 274-amino-acid polypeptide reads, in one-letter code: 4-diphosphocytidyl-2-C-methyl-D-erythritol kinase (274 aa).

Residue Lys-10 is part of the active site. Position 101–111 (101–111) interacts with ATP; that stretch reads PTQAGLGGGSA. Asp-143 is an active-site residue.

The protein belongs to the GHMP kinase family. IspE subfamily.

The catalysed reaction is 4-CDP-2-C-methyl-D-erythritol + ATP = 4-CDP-2-C-methyl-D-erythritol 2-phosphate + ADP + H(+). It functions in the pathway isoprenoid biosynthesis; isopentenyl diphosphate biosynthesis via DXP pathway; isopentenyl diphosphate from 1-deoxy-D-xylulose 5-phosphate: step 3/6. Catalyzes the phosphorylation of the position 2 hydroxy group of 4-diphosphocytidyl-2C-methyl-D-erythritol. This is 4-diphosphocytidyl-2-C-methyl-D-erythritol kinase from Helicobacter pylori (strain J99 / ATCC 700824) (Campylobacter pylori J99).